The primary structure comprises 110 residues: Large ribosomal subunit protein uL22 (110 aa).

Belongs to the universal ribosomal protein uL22 family. In terms of assembly, part of the 50S ribosomal subunit.

Its function is as follows. This protein binds specifically to 23S rRNA; its binding is stimulated by other ribosomal proteins, e.g. L4, L17, and L20. It is important during the early stages of 50S assembly. It makes multiple contacts with different domains of the 23S rRNA in the assembled 50S subunit and ribosome. Functionally, the globular domain of the protein is located near the polypeptide exit tunnel on the outside of the subunit, while an extended beta-hairpin is found that lines the wall of the exit tunnel in the center of the 70S ribosome. The protein is Large ribosomal subunit protein uL22 of Vibrio cholerae serotype O1 (strain ATCC 39541 / Classical Ogawa 395 / O395).